Consider the following 282-residue polypeptide: 4-hydroxybenzoate octaprenyltransferase (282 aa).

Transmembrane regions (helical) follow at residues 17–37 (IGILLLWYPTAWALWMANQGF), 40–60 (IDLLMIFLLGTVFMRSAGCVI), 90–110 (AFILLFILLCASLLLLLKLPI), 113–133 (FYFAVISVLITFLYPFCKRFL), 135–155 (APQLILGLAFSMGIPMAFIAS), 163–183 (FIVLFLINFSWIIAYDTMYAM), 207–227 (LIIALLLIFLHSLWLVWAINK), 231–251 (WFFYLLWCTAAGILTYQLKLI), and 262–282 (AFLVSGYYGLVMWFAVGLALI).

This sequence belongs to the UbiA prenyltransferase family. The cofactor is Mg(2+).

It is found in the cell inner membrane. The catalysed reaction is all-trans-octaprenyl diphosphate + 4-hydroxybenzoate = 4-hydroxy-3-(all-trans-octaprenyl)benzoate + diphosphate. It participates in cofactor biosynthesis; ubiquinone biosynthesis. Catalyzes the prenylation of para-hydroxybenzoate (PHB) with an all-trans polyprenyl group. Mediates the second step in the final reaction sequence of ubiquinone-8 (UQ-8) biosynthesis, which is the condensation of the polyisoprenoid side chain with PHB, generating the first membrane-bound Q intermediate 3-octaprenyl-4-hydroxybenzoate. This Legionella pneumophila subsp. pneumophila (strain Philadelphia 1 / ATCC 33152 / DSM 7513) protein is 4-hydroxybenzoate octaprenyltransferase.